The sequence spans 508 residues: Photosystem II CP47 reaction center protein (508 aa).

The next 6 helical transmembrane spans lie at 21–36 (SVHI…WAGS), 101–115 (IVFS…IWHW), 140–156 (GIHL…FGAF), 203–218 (IAAG…FHLS), 237–252 (VLSS…AFVV), and 457–472 (SFAL…HGAR).

Belongs to the PsbB/PsbC family. PsbB subfamily. PSII is composed of 1 copy each of membrane proteins PsbA, PsbB, PsbC, PsbD, PsbE, PsbF, PsbH, PsbI, PsbJ, PsbK, PsbL, PsbM, PsbT, PsbX, PsbY, PsbZ, Psb30/Ycf12, at least 3 peripheral proteins of the oxygen-evolving complex and a large number of cofactors. It forms dimeric complexes. Binds multiple chlorophylls. PSII binds additional chlorophylls, carotenoids and specific lipids. serves as cofactor.

It is found in the plastid. It localises to the chloroplast thylakoid membrane. In terms of biological role, one of the components of the core complex of photosystem II (PSII). It binds chlorophyll and helps catalyze the primary light-induced photochemical processes of PSII. PSII is a light-driven water:plastoquinone oxidoreductase, using light energy to abstract electrons from H(2)O, generating O(2) and a proton gradient subsequently used for ATP formation. This chain is Photosystem II CP47 reaction center protein, found in Atropa belladonna (Belladonna).